Here is an 800-residue protein sequence, read N- to C-terminus: Phenylalanine--tRNA ligase beta subunit (800 aa).

The region spanning 39-154 (TKDIKKLVVG…EAVKPGTDAL (116 aa)) is the tRNA-binding domain. The 76-residue stretch at 408 to 483 (SFVTPIEITA…RIYGYDEIPS (76 aa)) folds into the B5 domain. The Mg(2+) site is built by Asp461, Asp467, Glu470, and Glu471. The FDX-ACB domain maps to 708–800 (PRFPGVTRDI…ALKKHGAIIR (93 aa)).

It belongs to the phenylalanyl-tRNA synthetase beta subunit family. Type 1 subfamily. As to quaternary structure, tetramer of two alpha and two beta subunits. Mg(2+) is required as a cofactor.

The protein localises to the cytoplasm. The catalysed reaction is tRNA(Phe) + L-phenylalanine + ATP = L-phenylalanyl-tRNA(Phe) + AMP + diphosphate + H(+). This chain is Phenylalanine--tRNA ligase beta subunit, found in Staphylococcus epidermidis (strain ATCC 12228 / FDA PCI 1200).